A 281-amino-acid chain; its full sequence is Endochitinase B (281 aa).

An N-terminal signal peptide occupies residues 1–33 (MAMAKAGAPRVSAAQLVTLGLSLLCAVAGPAAA). The Chitin-binding type-1 domain maps to 34–68 (QNCGCQPNVCCSKFGYCGTTDEYCGDGCQSGPCRS). 4 cysteine pairs are disulfide-bonded: cysteine 36/cysteine 44, cysteine 38/cysteine 50, cysteine 43/cysteine 57, and cysteine 61/cysteine 66. Residues 69-78 (GGGGSSGGGG) are hinge region (Gly-rich). The interval 79-281 (ANVASVVTGS…GVDPGPNLTC (203 aa)) is catalytic. A disulfide bridge connects residues cysteine 101 and cysteine 150. Glutamate 145 (proton donor) is an active-site residue. An N-linked (GlcNAc...) asparagine glycan is attached at asparagine 156. Intrachain disulfides connect cysteine 162–cysteine 171 and cysteine 249–cysteine 281. Asparagine 278 carries an N-linked (GlcNAc...) asparagine glycan.

This sequence belongs to the glycosyl hydrolase 19 family. Chitinase class I subfamily.

The protein resides in the secreted. It carries out the reaction Random endo-hydrolysis of N-acetyl-beta-D-glucosaminide (1-&gt;4)-beta-linkages in chitin and chitodextrins.. Functionally, defense against chitin-containing fungal pathogens. Its action is countered by fungal polyglycine hydrolases, that cleaves within its hinge region (Gly-rich) to disrupt chitin-binding. This Zea mays (Maize) protein is Endochitinase B.